Reading from the N-terminus, the 514-residue chain is Probable E3 ubiquitin-protein ligase ARI10 (514 aa).

Over residues 1–18 (MDYSDDDMIDNESGEENN) the composition is skewed to acidic residues. The segment at 1–26 (MDYSDDDMIDNESGEENNSDGGGNES) is disordered. A TRIAD supradomain region spans residues 117-322 (VDIQCGICFE…SDHYACNNYV (206 aa)). Zn(2+)-binding residues include Cys-121, Cys-124, Cys-138, His-140, Cys-143, Cys-146, Cys-166, Cys-171, Cys-210, Cys-215, Cys-231, Cys-233, Cys-238, Cys-241, His-246, Cys-251, Cys-278, and Cys-281. Residues 121-171 (CGICFESYTRKEIASVSCGHPYCKTCWTGYITTKIEDGPGCLRVKCPEPSC) form an RING-type 1 zinc finger. The segment at 190 to 251 (DKYYRYFLRS…SEDAHSPVDC (62 aa)) adopts an IBR-type zinc-finger fold. The RING-type 2; atypical zinc-finger motif lies at 278-308 (CPKCKRPIEKSHGCNHMTCSASCGHRFCWIC). Cys-291 is a catalytic residue. Zn(2+)-binding residues include Cys-296, Cys-300, Cys-305, Cys-308, His-315, and Cys-318.

Belongs to the RBR family. Ariadne subfamily. Zn(2+) is required as a cofactor.

It carries out the reaction [E2 ubiquitin-conjugating enzyme]-S-ubiquitinyl-L-cysteine + [acceptor protein]-L-lysine = [E2 ubiquitin-conjugating enzyme]-L-cysteine + [acceptor protein]-N(6)-ubiquitinyl-L-lysine.. It participates in protein modification; protein ubiquitination. Might act as an E3 ubiquitin-protein ligase, or as part of E3 complex, which accepts ubiquitin from specific E2 ubiquitin-conjugating enzymes and then transfers it to substrates. The protein is Probable E3 ubiquitin-protein ligase ARI10 (ARI10) of Arabidopsis thaliana (Mouse-ear cress).